The sequence spans 236 residues: Ubiquinone biosynthesis O-methyltransferase (236 aa).

S-adenosyl-L-methionine is bound by residues R36, G60, D81, and L123.

This sequence belongs to the methyltransferase superfamily. UbiG/COQ3 family.

It catalyses the reaction a 3-demethylubiquinol + S-adenosyl-L-methionine = a ubiquinol + S-adenosyl-L-homocysteine + H(+). It carries out the reaction a 3-(all-trans-polyprenyl)benzene-1,2-diol + S-adenosyl-L-methionine = a 2-methoxy-6-(all-trans-polyprenyl)phenol + S-adenosyl-L-homocysteine + H(+). It participates in cofactor biosynthesis; ubiquinone biosynthesis. In terms of biological role, O-methyltransferase that catalyzes the 2 O-methylation steps in the ubiquinone biosynthetic pathway. The chain is Ubiquinone biosynthesis O-methyltransferase from Rickettsia canadensis (strain McKiel).